The sequence spans 233 residues: UPF0502 protein Mpe_A1449 (233 aa).

This sequence belongs to the UPF0502 family.

The protein is UPF0502 protein Mpe_A1449 of Methylibium petroleiphilum (strain ATCC BAA-1232 / LMG 22953 / PM1).